A 511-amino-acid chain; its full sequence is Maturase K (511 aa).

Belongs to the intron maturase 2 family. MatK subfamily.

Its subcellular location is the plastid. It is found in the chloroplast. Usually encoded in the trnK tRNA gene intron. Probably assists in splicing its own and other chloroplast group II introns. The polypeptide is Maturase K (Nardus stricta (Mat-grass)).